Consider the following 249-residue polypeptide: MSQAAETLDGWYSLHLFYAVDWPTLRLVPDEDRIQIVQEFHDFLDKLASVRDDHNGDHALYNITGQKADILLWVLRPEMQELNSIELALNKLRIADYLVPTYSYVSIIELSNYLAGKSDEDPYENPHVKARLYPELPHSDYICFYPMNKRRNETYNWYMLSMEERQKLMYDHGMIGRKYAGKIKQFITGSVGFDDYEWGVTLFAQDPLQFKKIVYEMRFDETTARYGDFGSFFVGHVLPEETLETFFRI.

Fe-coproporphyrin III is bound by residues arginine 131, 145–149 (YPMNK), histidine 172, and glutamine 185. Tyrosine 145 is an active-site residue.

Belongs to the ChdC family. Type 1 subfamily. It depends on Fe-coproporphyrin III as a cofactor.

It catalyses the reaction Fe-coproporphyrin III + 2 H2O2 + 2 H(+) = heme b + 2 CO2 + 4 H2O. The catalysed reaction is Fe-coproporphyrin III + H2O2 + H(+) = harderoheme III + CO2 + 2 H2O. It carries out the reaction harderoheme III + H2O2 + H(+) = heme b + CO2 + 2 H2O. It functions in the pathway porphyrin-containing compound metabolism; protoheme biosynthesis. Functionally, involved in coproporphyrin-dependent heme b biosynthesis. Catalyzes the decarboxylation of Fe-coproporphyrin III (coproheme) to heme b (protoheme IX), the last step of the pathway. The reaction occurs in a stepwise manner with a three-propionate intermediate. The polypeptide is Coproheme decarboxylase (Staphylococcus carnosus (strain TM300)).